The following is a 206-amino-acid chain: Enterobactin synthase component D (206 aa).

Residues aspartate 107, glutamate 109, and glutamate 152 each contribute to the Mg(2+) site.

It belongs to the P-Pant transferase superfamily. EntD family. In terms of assembly, entB, EntD, EntE, and EntF form a multienzyme complex called enterobactin synthase. It depends on Mg(2+) as a cofactor.

It is found in the membrane. The enzyme catalyses apo-[aryl-carrier protein] + CoA = holo-[aryl-carrier protein] + adenosine 3',5'-bisphosphate + H(+). The catalysed reaction is apo-[peptidyl-carrier protein] + CoA = holo-[peptidyl-carrier protein] + adenosine 3',5'-bisphosphate + H(+). It functions in the pathway siderophore biosynthesis; enterobactin biosynthesis. Functionally, involved in the biosynthesis of the siderophore enterobactin (enterochelin), which is a macrocyclic trimeric lactone of N-(2,3-dihydroxybenzoyl)-serine. The serine trilactone serves as a scaffolding for the three catechol functionalities that provide hexadentate coordination for the tightly ligated iron(2+) atoms. Plays an essential role in the assembly of the enterobactin by catalyzing the transfer of the 4'-phosphopantetheine (Ppant) moiety from coenzyme A to the apo-domains of both EntB (ArCP domain) and EntF (PCP domain) to yield their holo-forms which make them competent for the activation of 2,3-dihydroxybenzoate (DHB) and L-serine, respectively. The chain is Enterobactin synthase component D from Escherichia coli O157:H7.